The chain runs to 163 residues: RNA pyrophosphohydrolase (163 aa).

One can recognise a Nudix hydrolase domain in the interval 6 to 149 (GYRLNVGIVI…KRDVYRQVMK (144 aa)). A Nudix box motif is present at residues 38 to 59 (GGIHLTESPEEAMYRELFEELG).

It belongs to the Nudix hydrolase family. RppH subfamily. The cofactor is a divalent metal cation.

Accelerates the degradation of transcripts by removing pyrophosphate from the 5'-end of triphosphorylated RNA, leading to a more labile monophosphorylated state that can stimulate subsequent ribonuclease cleavage. This Hamiltonella defensa subsp. Acyrthosiphon pisum (strain 5AT) protein is RNA pyrophosphohydrolase.